The following is a 142-amino-acid chain: Immunoglobulin omega chain (142 aa).

The signal sequence occupies residues 1–19; the sequence is MAWTSVLLMLLAHLTGCGP. The segment at 20–41 is framework-1; that stretch reads QPMVHQPPSASSSLGATIRLSC. The cysteines at positions 41 and 115 are disulfide-linked. Residues 42-56 form a complementarity-determining-1 region; it reads TLSNDHNIGIYSIYW. The tract at residues 57 to 70 is framework-2; that stretch reads YQQRPGHPPRFLLR. Residues 71–81 form a complementarity-determining-2 region; the sequence is YFSHSDKHQGP. The interval 82–115 is framework-3; sequence DIPPRFSGSKDTARNLGYLSISELQPEDEAVYYC.

Belongs to the immunoglobulin superfamily. In terms of tissue distribution, only expressed by pre-B-cells.

Functionally, associates with the Ig-mu chain to form a molecular complex that is expressed on the surface of pre-B-cells. This complex presumably regulates Ig gene rearrangements in the early steps of B-cell differentiation. The polypeptide is Immunoglobulin omega chain (Mus musculus (Mouse)).